Consider the following 154-residue polypeptide: Transcriptional repressor NrdR (154 aa).

A zinc finger lies at 3–34 (CPFCRHPDSRVIDSRETDEGQAIRRRRSCPEC). The 91-residue stretch at 46-136 (LAVVKRSGVT…VYRSFSSADD (91 aa)) folds into the ATP-cone domain.

The protein belongs to the NrdR family. Zn(2+) is required as a cofactor.

Its function is as follows. Negatively regulates transcription of bacterial ribonucleotide reductase nrd genes and operons by binding to NrdR-boxes. This chain is Transcriptional repressor NrdR, found in Mycobacterium bovis (strain ATCC BAA-935 / AF2122/97).